A 250-amino-acid polypeptide reads, in one-letter code: Triosephosphate isomerase (250 aa).

9–11 is a substrate binding site; it reads NWK. Histidine 95 functions as the Electrophile in the catalytic mechanism. Catalysis depends on glutamate 167, which acts as the Proton acceptor. Residues glycine 173, serine 212, and 233–234 contribute to the substrate site; that span reads GG.

Belongs to the triosephosphate isomerase family. Homodimer.

Its subcellular location is the cytoplasm. It carries out the reaction D-glyceraldehyde 3-phosphate = dihydroxyacetone phosphate. It functions in the pathway carbohydrate biosynthesis; gluconeogenesis. It participates in carbohydrate degradation; glycolysis; D-glyceraldehyde 3-phosphate from glycerone phosphate: step 1/1. Functionally, involved in the gluconeogenesis. Catalyzes stereospecifically the conversion of dihydroxyacetone phosphate (DHAP) to D-glyceraldehyde-3-phosphate (G3P). In Endomicrobium trichonymphae, this protein is Triosephosphate isomerase.